We begin with the raw amino-acid sequence, 281 residues long: Endochitinase B (281 aa).

The first 33 residues, 1-33 (MAMAKAGAPRVSAAQLVTLGLSLLCAVAGPAAA), serve as a signal peptide directing secretion. The region spanning 34–68 (QNCGCQPNVCCSKFGYCGTTDEYCGDGCQSGPCRS) is the Chitin-binding type-1 domain. Disulfide bonds link Cys-36–Cys-44, Cys-38–Cys-50, Cys-43–Cys-57, and Cys-61–Cys-66. The interval 69-78 (GGGGSSGGGG) is hinge region (Gly-rich). A catalytic region spans residues 79 to 281 (ANVASVVTGS…GVDPGPNLTC (203 aa)). Cys-101 and Cys-150 are oxidised to a cystine. The active-site Proton donor is the Glu-145. N-linked (GlcNAc...) asparagine glycosylation occurs at Asn-156. Cystine bridges form between Cys-162–Cys-171 and Cys-249–Cys-281. Asn-278 carries N-linked (GlcNAc...) asparagine glycosylation.

This sequence belongs to the glycosyl hydrolase 19 family. Chitinase class I subfamily.

Its subcellular location is the secreted. The catalysed reaction is Random endo-hydrolysis of N-acetyl-beta-D-glucosaminide (1-&gt;4)-beta-linkages in chitin and chitodextrins.. Its function is as follows. Defense against chitin-containing fungal pathogens. Its action is countered by fungal polyglycine hydrolases, that cleaves within its hinge region (Gly-rich) to disrupt chitin-binding. The polypeptide is Endochitinase B (Zea mays (Maize)).